The chain runs to 347 residues: MSALTPASEVILRHSDEFIARHVLFAGDLQDALPAQFDAAGVRVHTNQYHHWQLLSNTLEENVQFGLLATAETLAACDTLIYYWPKSKQEAQFQLANLLSILPVGTDIFVVGENRSGVRSAEEMLADFAQLAKIDSARRCGLYHGRLDKQPEFDADAWWESYQVGSVTVKTLPGVFSRDSLDSGSHLLLSTFNEPFKGSVLDVGCGAGVLASVLAQQSPKIKWTLSDVSAAAIEASRATLAVNNIEAQVIASNVYSDIKGRFEMIISNPPFHDGIQTSLTAAEMLIRGATAHLHVGGKLRIVANSFLPYPALLDAAFGSHEVLAQNGRFKVYQATVGRPPRDPKKKR.

This sequence belongs to the methyltransferase superfamily. RsmC family. Monomer.

It localises to the cytoplasm. It carries out the reaction guanosine(1207) in 16S rRNA + S-adenosyl-L-methionine = N(2)-methylguanosine(1207) in 16S rRNA + S-adenosyl-L-homocysteine + H(+). Its function is as follows. Specifically methylates the guanine in position 1207 of 16S rRNA in the 30S particle. This is Ribosomal RNA small subunit methyltransferase C from Yersinia pseudotuberculosis serotype IB (strain PB1/+).